A 154-amino-acid chain; its full sequence is MTHCCSPCCQPTCCRTTCCRTTCWKPTTVTTCSSTPCCQPSCCVSSCCQPCCRPTCCQNTCCQPTCVTSCCQPSCCSTPCCQPTCCGSSCDQSSSCAPVYCRRTCYYPTTVCLPGCLNQSCGSNCCQPCCRPACCETTCFQPTCVSSCCQPFCC.

Repeat copies occupy residues 8-12, 13-17, 18-22, 37-41, 42-46, 51-55, 56-60, 61-65, 70-74, 75-79, 80-84, 85-89, 129-133, 134-138, and 148-152. The segment at 8 to 152 is 15 X 5 AA repeats of C-C-[RQVGE]-[SPTN]-[TASPF]; the sequence is CCQPTCCRTT…TCVSSCCQPF (145 aa).

Belongs to the KRTAP type 9 family. In terms of assembly, interacts with hair keratins.

Its function is as follows. In the hair cortex, hair keratin intermediate filaments are embedded in an interfilamentous matrix, consisting of hair keratin-associated proteins (KRTAP), which are essential for the formation of a rigid and resistant hair shaft through their extensive disulfide bond cross-linking with abundant cysteine residues of hair keratins. The matrix proteins include the high-sulfur and high-glycine-tyrosine keratins. The polypeptide is Keratin-associated protein 9-4 (KRTAP9-4) (Homo sapiens (Human)).